The sequence spans 323 residues: tRNA U34 carboxymethyltransferase (323 aa).

Carboxy-S-adenosyl-L-methionine-binding positions include lysine 91, tryptophan 105, lysine 110, glycine 130, 152–154, 181–182, methionine 196, tyrosine 200, and arginine 315; these read DPS and IE.

This sequence belongs to the class I-like SAM-binding methyltransferase superfamily. CmoB family. In terms of assembly, homotetramer.

The enzyme catalyses carboxy-S-adenosyl-L-methionine + 5-hydroxyuridine(34) in tRNA = 5-carboxymethoxyuridine(34) in tRNA + S-adenosyl-L-homocysteine + H(+). In terms of biological role, catalyzes carboxymethyl transfer from carboxy-S-adenosyl-L-methionine (Cx-SAM) to 5-hydroxyuridine (ho5U) to form 5-carboxymethoxyuridine (cmo5U) at position 34 in tRNAs. This chain is tRNA U34 carboxymethyltransferase, found in Vibrio parahaemolyticus serotype O3:K6 (strain RIMD 2210633).